The following is a 470-amino-acid chain: MLNHVVTRFAPSPTGHLHLGGARTALFNWLYAKHNNGKFLLRIEDTDSKRSSKELIDSIINSMIWLNIQHDGDIILQSSRISRHIEIANQLILNDKAYYCYCSEEEINLEKEEYTKKGLHYKHNCIWKNRNPPIGNCSKVIRLHSDTEGITEFKDKVYGTIAVNNVQLDDMVLLRSNNTPTYLLSVVVDDYDMGITHIIRGTDHLTNTARQLLIYNALGWKPPEFAHIPLIHDENGNKLSKRHHALGIHEYKNAGILPEALLNYLLRMGWSHGNDEVITIDEAIRWFSIDKVGQSPARLDSKKLEFLNNHYINATNNATIIEMIIPIIEKTIGYKVNTEKIGYLLNGINELKKRTKNLVNLANESLFYVEDIPISFDQESLIIIKSNHDILSILYDNLSKVLNDDWNNSTLTSMIKNIVKDYNTKIHNIYHCLRASIIGRINAPSIIDIMVNFQREECLNRIKYARDMVK.

The 'HIGH' region motif lies at 11 to 21; that stretch reads PSPTGHLHLGG. The 'KMSKS' region signature appears at 238–242; it reads KLSKR. Lys-241 serves as a coordination point for ATP.

It belongs to the class-I aminoacyl-tRNA synthetase family. Glutamate--tRNA ligase type 1 subfamily. In terms of assembly, monomer.

It localises to the cytoplasm. It carries out the reaction tRNA(Glu) + L-glutamate + ATP = L-glutamyl-tRNA(Glu) + AMP + diphosphate. Catalyzes the attachment of glutamate to tRNA(Glu) in a two-step reaction: glutamate is first activated by ATP to form Glu-AMP and then transferred to the acceptor end of tRNA(Glu). The polypeptide is Glutamate--tRNA ligase 2 (Ehrlichia ruminantium (strain Welgevonden)).